We begin with the raw amino-acid sequence, 382 residues long: Succinate--CoA ligase [ADP-forming] subunit beta (382 aa).

The 232-residue stretch at 9-240 (KELFAKYGVK…PRDITEFEAY (232 aa)) folds into the ATP-grasp domain. ATP-binding positions include lysine 45, 52-54 (GRG), leucine 94, and glutamate 99. Positions 193 and 207 each coordinate Mg(2+). Substrate contacts are provided by residues asparagine 260 and 317–319 (GIT).

It belongs to the succinate/malate CoA ligase beta subunit family. In terms of assembly, heterotetramer of two alpha and two beta subunits. Mg(2+) is required as a cofactor.

The catalysed reaction is succinate + ATP + CoA = succinyl-CoA + ADP + phosphate. It catalyses the reaction GTP + succinate + CoA = succinyl-CoA + GDP + phosphate. Its pathway is carbohydrate metabolism; tricarboxylic acid cycle; succinate from succinyl-CoA (ligase route): step 1/1. Functionally, succinyl-CoA synthetase functions in the citric acid cycle (TCA), coupling the hydrolysis of succinyl-CoA to the synthesis of either ATP or GTP and thus represents the only step of substrate-level phosphorylation in the TCA. The beta subunit provides nucleotide specificity of the enzyme and binds the substrate succinate, while the binding sites for coenzyme A and phosphate are found in the alpha subunit. This chain is Succinate--CoA ligase [ADP-forming] subunit beta, found in Pyrobaculum calidifontis (strain DSM 21063 / JCM 11548 / VA1).